Here is a 212-residue protein sequence, read N- to C-terminus: External core antigen (212 aa).

A signal peptide spans Met1–Ala19. An HBEAG region spans residues Gly25–Leu27. The segment at Asn165–Cys212 is disordered. The span at Gln180–Ser205 shows a compositional bias: basic residues. One copy of the 1; half-length repeat lies at Ala184–Pro190. The tract at residues Ala184–Gln206 is 3 X 8 AA repeats of S-P-R-R-R-R-S-Q. Positions Ala184–Cys212 are excised as a propeptide. 2 consecutive repeat copies span residues Ser191–Gln198 and Ser199–Gln206.

The protein belongs to the orthohepadnavirus precore antigen family. Homodimerizes. Post-translationally, phosphorylated. In terms of processing, cleaved by host furin.

The protein localises to the secreted. It localises to the host nucleus. In terms of biological role, may regulate immune response to the intracellular capsid in acting as a T-cell tolerogen, by having an immunoregulatory effect which prevents destruction of infected cells by cytotoxic T-cells. This immune regulation may predispose to chronicity during perinatal infections and prevent severe liver injury during adult infections. In Hepatitis B virus genotype H subtype adw4 (isolate Nicaragua/2928Nic/1997) (HBV-H), this protein is External core antigen.